The following is a 185-amino-acid chain: uncharacterized protein (185 aa).

This is an uncharacterized protein from Acanthamoeba polyphaga (Amoeba).